The primary structure comprises 152 residues: Transcriptional regulator MraZ (152 aa).

SpoVT-AbrB domains lie at 5-52 (ATLV…PLPE) and 81-124 (ASEC…DEQT).

The protein belongs to the MraZ family. In terms of assembly, forms oligomers.

The protein resides in the cytoplasm. Its subcellular location is the nucleoid. In terms of biological role, negatively regulates its own expression and that of the subsequent genes in the proximal part of the division and cell wall (dcw) gene cluster. Acts by binding directly to DNA. May also regulate the expression of genes outside the dcw cluster. In Erwinia tasmaniensis (strain DSM 17950 / CFBP 7177 / CIP 109463 / NCPPB 4357 / Et1/99), this protein is Transcriptional regulator MraZ.